The chain runs to 263 residues: Transmembrane protein 176B (263 aa).

The next 4 membrane-spanning stretches (helical) occupy residues 61-81 (LGVT…CLYF), 89-109 (ASGC…GIVI), 125-145 (LLLA…KSLI), and 197-217 (LFLA…VVSV). The interval 242-263 (KKLLGGDSAPASPTKEKIPVTP) is disordered. A phosphoserine mark is found at serine 249 and serine 253.

Belongs to the TMEM176 family. In terms of tissue distribution, expressed in spleen by a variety of myeloid cells including macrophages and dendritic cells (at protein level). Ubiquitously expressed with higher expression in lymphoid tissues.

It is found in the nucleus membrane. Required for the development of cerebellar granule cells. May play a role in the process of maturation of dendritic cells. The polypeptide is Transmembrane protein 176B (Tmem176b) (Rattus norvegicus (Rat)).